Reading from the N-terminus, the 536-residue chain is E3 ubiquitin-protein ligase Godzilla (536 aa).

The signal sequence occupies residues 1 to 21; sequence MSKRSCQILTLLGLCLVCHEA. The Extracellular segment spans residues 22–174; the sequence is TLVGGHVLVY…DELPFNINTQ (153 aa). The PA domain maps to 89 to 151; it reads FVALVARGEC…FVGHTTGKAL (63 aa). N-linked (GlcNAc...) asparagine glycans are attached at residues N109 and N132. Residues 175 to 195 traverse the membrane as a helical segment; the sequence is LILPFSILIGMCFIIMVIYMI. Over 196-536 the chain is Cytoplasmic; sequence YKCIREQRRL…HSASDRQFLI (341 aa). The RING-type; atypical zinc-finger motif lies at 235–277; the sequence is CVICLEDFIEDDKLRVLPCSHPYHTHCIDPWLTENRRVCPICK. Disordered regions lie at residues 287–334 and 350–372; these read RASR…GAAG and HGTF…SDDE. Low complexity predominate over residues 307 to 334; that stretch reads TPLLQQQQSNGRQVGQVSSASSAGGAAG.

Belongs to the Godzilla family.

The protein localises to the endosome membrane. The enzyme catalyses S-ubiquitinyl-[E2 ubiquitin-conjugating enzyme]-L-cysteine + [acceptor protein]-L-lysine = [E2 ubiquitin-conjugating enzyme]-L-cysteine + N(6)-ubiquitinyl-[acceptor protein]-L-lysine.. It participates in protein modification; protein ubiquitination. Functionally, endosomal E3 ubiquitin-protein ligase that regulates the recycling endosome pathway by mediating ubiquitination of Synaptobrevin (Syb). Also acts as a regulator of transcytosis in wing imaginal disks by catalyzing ubiquitination of Syb: ubiquitination of Syb promotes transcytosis of wingless (wg) to the basolateral surface. This is E3 ubiquitin-protein ligase Godzilla from Drosophila melanogaster (Fruit fly).